The chain runs to 511 residues: Ectonucleoside triphosphate diphosphohydrolase 1 (511 aa).

Topologically, residues 1–16 (MEDIKDSKVKRFCSKN) are cytoplasmic. A helical membrane pass occupies residues 17-37 (ILIILGFSSVLAVIALIAVGL). Topologically, residues 38 to 478 (THNKPLPENV…LSPPLPHSTY (441 aa)) are extracellular. Residues 46–171 (NVKYGIVLDA…DFQGAKIITG (126 aa)) form an N-terminal lobe region. Asn73 carries an N-linked (GlcNAc...) asparagine glycan. Cys84 and Cys108 form a disulfide bridge. The active-site Proton acceptor is Glu174. A C-terminal lobe region spans residues 205 to 441 (QATFGALDLG…GTSWDQIHFM (237 aa)). 3 N-linked (GlcNAc...) asparagine glycosylation sites follow: Asn226, Asn291, and Asn333. 2 disulfides stabilise this stretch: Cys254–Cys300 and Cys281–Cys324. A disulfide bond links Cys337 and Cys342. N-linked (GlcNAc...) asparagine glycosylation occurs at Asn374. A disulfide bridge connects residues Cys391 and Cys414. N-linked (GlcNAc...) asparagine glycans are attached at residues Asn429 and Asn458. Residues 479–499 (ISLMVLFSLVLVAMVITGLFI) form a helical membrane-spanning segment. The Cytoplasmic segment spans residues 500 to 511 (FSKPSYFWKEAV).

Belongs to the GDA1/CD39 NTPase family. As to quaternary structure, homodimer; disulfide-linked. The cofactor is Ca(2+). Mg(2+) serves as cofactor. N-glycosylated. Post-translationally, the N-terminus is blocked. In terms of processing, palmitoylated on Cys-13; which is required for caveola targeting. In terms of tissue distribution, expressed in primary neurons and astrocytes, kidney, liver, muscle, thymus, lung and spleen.

The protein resides in the membrane. The protein localises to the caveola. The enzyme catalyses a ribonucleoside 5'-triphosphate + 2 H2O = a ribonucleoside 5'-phosphate + 2 phosphate + 2 H(+). It carries out the reaction a ribonucleoside 5'-triphosphate + H2O = a ribonucleoside 5'-diphosphate + phosphate + H(+). It catalyses the reaction a ribonucleoside 5'-diphosphate + H2O = a ribonucleoside 5'-phosphate + phosphate + H(+). The catalysed reaction is ATP + 2 H2O = AMP + 2 phosphate + 2 H(+). The enzyme catalyses ATP + H2O = ADP + phosphate + H(+). It carries out the reaction ADP + H2O = AMP + phosphate + H(+). It catalyses the reaction CTP + 2 H2O = CMP + 2 phosphate + 2 H(+). The catalysed reaction is CTP + H2O = CDP + phosphate + H(+). The enzyme catalyses CDP + H2O = CMP + phosphate + H(+). It carries out the reaction GTP + 2 H2O = GMP + 2 phosphate + 2 H(+). It catalyses the reaction GTP + H2O = GDP + phosphate + H(+). The catalysed reaction is GDP + H2O = GMP + phosphate + H(+). The enzyme catalyses ITP + 2 H2O = IMP + 2 phosphate + 2 H(+). It carries out the reaction ITP + H2O = IDP + phosphate + H(+). It catalyses the reaction IDP + H2O = IMP + phosphate + H(+). The catalysed reaction is UTP + 2 H2O = UMP + 2 phosphate + 2 H(+). The enzyme catalyses UTP + H2O = UDP + phosphate + H(+). It carries out the reaction UDP + H2O = UMP + phosphate + H(+). Catalyzes the hydrolysis of both di- and triphosphate nucleotides (NDPs and NTPs) and hydrolyze NTPs to nucleotide monophosphates (NMPs) in two distinct successive phosphate-releasing steps, with NDPs as intermediates and participates in the regulation of extracellular levels of nucleotides. By hydrolyzing proinflammatory ATP and platelet-activating ADP to AMP, it blocks platelet aggregation and supports blood flow. The sequence is that of Ectonucleoside triphosphate diphosphohydrolase 1 from Rattus norvegicus (Rat).